We begin with the raw amino-acid sequence, 318 residues long: Nucleotide-binding protein Jann_0539 (318 aa).

Residue 17–24 participates in ATP binding; it reads GPSGAGRS. 64-67 lines the GTP pocket; it reads DPRT. The tract at residues 278–318 is disordered; sequence GWQVSKRHRDVDKDASENSDRDRGASARTAASTDDGEAEQP. The segment covering 286–302 has biased composition (basic and acidic residues); that stretch reads RDVDKDASENSDRDRGA.

It belongs to the RapZ-like family.

In terms of biological role, displays ATPase and GTPase activities. The protein is Nucleotide-binding protein Jann_0539 of Jannaschia sp. (strain CCS1).